A 478-amino-acid polypeptide reads, in one-letter code: Protein nucleotidyltransferase YdiU (478 aa).

Residues glycine 84, glycine 86, arginine 87, lysine 107, aspartate 119, glycine 120, arginine 170, and arginine 177 each coordinate ATP. Aspartate 246 serves as the catalytic Proton acceptor. Mg(2+) is bound by residues asparagine 247 and aspartate 256. Position 256 (aspartate 256) interacts with ATP.

Belongs to the SELO family. It depends on Mg(2+) as a cofactor. Mn(2+) serves as cofactor.

The catalysed reaction is L-seryl-[protein] + ATP = 3-O-(5'-adenylyl)-L-seryl-[protein] + diphosphate. The enzyme catalyses L-threonyl-[protein] + ATP = 3-O-(5'-adenylyl)-L-threonyl-[protein] + diphosphate. It carries out the reaction L-tyrosyl-[protein] + ATP = O-(5'-adenylyl)-L-tyrosyl-[protein] + diphosphate. It catalyses the reaction L-histidyl-[protein] + UTP = N(tele)-(5'-uridylyl)-L-histidyl-[protein] + diphosphate. The catalysed reaction is L-seryl-[protein] + UTP = O-(5'-uridylyl)-L-seryl-[protein] + diphosphate. The enzyme catalyses L-tyrosyl-[protein] + UTP = O-(5'-uridylyl)-L-tyrosyl-[protein] + diphosphate. In terms of biological role, nucleotidyltransferase involved in the post-translational modification of proteins. It can catalyze the addition of adenosine monophosphate (AMP) or uridine monophosphate (UMP) to a protein, resulting in modifications known as AMPylation and UMPylation. This chain is Protein nucleotidyltransferase YdiU, found in Escherichia coli O1:K1 / APEC.